A 132-amino-acid polypeptide reads, in one-letter code: Agouti-signaling protein (132 aa).

The signal sequence occupies residues Met1–Ser22. N-linked (GlcNAc...) asparagine glycosylation occurs at Asn39. A disordered region spans residues Lys60 to Pro88. Residues Ser63–Met79 show a composition bias toward basic and acidic residues. Cystine bridges form between Cys93-Cys108, Cys100-Cys114, Cys107-Cys125, Cys111-Cys132, and Cys116-Cys123. The region spanning Cys93–Cys132 is the Agouti domain.

The protein localises to the secreted. Involved in the regulation of melanogenesis. The binding of ASP to MC1R precludes alpha-MSH initiated signaling and thus blocks production of cAMP, leading to a down-regulation of eumelanogenesis (brown/black pigment) and thus increasing synthesis of pheomelanin (yellow/red pigment). The protein is Agouti-signaling protein (ASIP) of Macaca cyclopis (Taiwan macaque).